The chain runs to 372 residues: Cytochrome b (372 aa).

The next 4 helical transmembrane spans lie at 25–45, 69–90, 105–125, and 170–190; these read FGSM…FLAI, WCLQ…YIHI, WMSG…GYVL, and FFAL…IHII. Heme b contacts are provided by His75 and His89. Heme b-binding residues include His174 and His188. Position 193 (His193) interacts with a ubiquinone. 4 consecutive transmembrane segments (helical) span residues 218–238, 280–300, 312–332, and 339–358; these read YKDL…MSFS, LGGT…PFTH, MAQF…WAAS, and YITI…IINP.

Belongs to the cytochrome b family. In terms of assembly, the cytochrome bc1 complex contains 3 respiratory subunits (MT-CYB, CYC1 and UQCRFS1), 2 core proteins (UQCRC1 and UQCRC2) and probably 6 low-molecular weight proteins. The cofactor is heme b.

The protein resides in the mitochondrion inner membrane. Functionally, component of the ubiquinol-cytochrome c reductase complex (complex III or cytochrome b-c1 complex) that is part of the mitochondrial respiratory chain. The b-c1 complex mediates electron transfer from ubiquinol to cytochrome c. Contributes to the generation of a proton gradient across the mitochondrial membrane that is then used for ATP synthesis. In Acrochordus granulatus (Rasp-skinned water snake), this protein is Cytochrome b (MT-CYB).